Consider the following 116-residue polypeptide: MRHKHGYRKLGRTSSHRKALLKNLAIALIEHNKIETGIYKAKELRSYIEKLTTVARVGDFNAHRHVFAYLQNKEATHKLVTEIAPKYAQRNGGYTRIQRTTFRRGDASTLATIEFV.

The protein belongs to the bacterial ribosomal protein bL17 family. Part of the 50S ribosomal subunit. Contacts protein L32.

This Helicobacter pylori (strain J99 / ATCC 700824) (Campylobacter pylori J99) protein is Large ribosomal subunit protein bL17.